Here is a 236-residue protein sequence, read N- to C-terminus: Syntaxin-8 (236 aa).

Topologically, residues 1 to 215 are cytoplasmic; sequence MAPDPWFSTY…LVDRKSTSCG (215 aa). Residues 42 to 65 are a coiled coil; that stretch reads VTIRALLQKLKEKIALLKDLLLRA. The 63-residue stretch at 145-207 folds into the t-SNARE coiled-coil homology domain; that stretch reads QKIIQEQDAG…RTETRRVNLV (63 aa). Serine 160 carries the post-translational modification Phosphoserine. A helical; Anchor for type IV membrane protein transmembrane segment spans residues 216-232; the sequence is MIMVILLLLVAIVVVAV. At 233 to 236 the chain is on the vesicular side; the sequence is WPTK.

The protein belongs to the syntaxin family. Forms a SNARE complex with STX7, VTI1B and VAMP8 which functions in the homotypic fusion of late endosomes. Part of the SNARE core complex containing STX7, VAMP8 and VTI1B. Interacts with VAMP8. Interacts with HECTD3. Interacts with TPC1. Ubiquitinated by HECTD3.

The protein resides in the membrane. Its function is as follows. Vesicle trafficking protein that functions in the early secretory pathway, possibly by mediating retrograde transport from cis-Golgi membranes to the ER. This chain is Syntaxin-8 (STX8), found in Bos taurus (Bovine).